Here is a 211-residue protein sequence, read N- to C-terminus: Endonuclease YncB (211 aa).

The N-terminal stretch at 1–19 is a signal peptide; sequence MKKILISMIAIVLSITLAA. A lipid anchor (N-palmitoyl cysteine) is attached at C20. C20 carries the S-diacylglycerol cysteine lipid modification. Residues 24 to 63 are disordered; the sequence is HAAKNHSDSNGTEQVSQDTHSNEYNQTEQKAGTPHSKNQK. A compositionally biased stretch (polar residues) spans 31–53; the sequence is DSNGTEQVSQDTHSNEYNQTEQK. Residues 64-197 form the TNase-like domain; it reads KLVNVTLDRA…KSDKLSIWSK (134 aa). D77 contacts Ca(2+). The active site involves R91. The Ca(2+) site is built by D96 and T97. Residues E99 and R142 contribute to the active site.

This sequence belongs to the thermonuclease family. Requires Ca(2+) as cofactor.

It is found in the cell membrane. With respect to regulation, inhibited by aurintricalboxylic acid but not by Zn(2+). Functionally, shows DNase activity on double strand DNA. The chain is Endonuclease YncB (yncB) from Bacillus subtilis (strain 168).